The following is a 118-amino-acid chain: Large ribosomal subunit protein bL19 (118 aa).

The protein belongs to the bacterial ribosomal protein bL19 family.

This protein is located at the 30S-50S ribosomal subunit interface and may play a role in the structure and function of the aminoacyl-tRNA binding site. This chain is Large ribosomal subunit protein bL19, found in Campylobacter jejuni subsp. jejuni serotype O:6 (strain 81116 / NCTC 11828).